We begin with the raw amino-acid sequence, 303 residues long: MIIDVNTPIPFRLDKYLKRLYPSLTQGVIEKALRQKQVTVNFQKAEANLRVKEGDTIFINDYFNLPVTQHETLVFADAEIKLAKKILTDYLIYEDDHLIAINKPASLATQGGSKINLSIDSALKYLNYQGADFKLVHRLDKETSGLLLIAKNYLSSVKLHDAFKEKLVIKKYFAITYGRPVKNVGIVKSNIGKSKGRMFKITDIDSDNGKLAITYYKLLKSLNNNLFLIEFMPVTGRMHQLRLHAQLLGCPILGDDKYGNKEVMPYSKYMFLHANNIYLSESIVGKEIKLEAKLPFYFTRRLT.

The S4 RNA-binding domain occupies 11-70 (FRLDKYLKRLYPSLTQGVIEKALRQKQVTVNFQKAEANLRVKEGDTIFINDYFNLPVTQH). The active site involves Asp140.

This sequence belongs to the pseudouridine synthase RluA family.

The enzyme catalyses uridine(955/2504/2580) in 23S rRNA = pseudouridine(955/2504/2580) in 23S rRNA. In terms of biological role, responsible for synthesis of pseudouridine from uracil at positions 955, 2504 and 2580 in 23S ribosomal RNA. The chain is Ribosomal large subunit pseudouridine synthase C (rluC) from Rickettsia typhi (strain ATCC VR-144 / Wilmington).